The following is a 205-amino-acid chain: Probable GTP-binding protein EngB (205 aa).

An EngB-type G domain is found at 27–201 (EGMEIAFAGR…AAKLDSWFSS (175 aa)). Residues 35 to 42 (GRSNAGKS), 62 to 66 (GRTQL), 80 to 83 (DLPG), 147 to 150 (TKAD), and 180 to 182 (FSA) each bind GTP. Mg(2+)-binding residues include S42 and T64.

The protein belongs to the TRAFAC class TrmE-Era-EngA-EngB-Septin-like GTPase superfamily. EngB GTPase family. Requires Mg(2+) as cofactor.

Its function is as follows. Necessary for normal cell division and for the maintenance of normal septation. This chain is Probable GTP-binding protein EngB, found in Mannheimia succiniciproducens (strain KCTC 0769BP / MBEL55E).